Here is a 204-residue protein sequence, read N- to C-terminus: Guanylate kinase (204 aa).

One can recognise a Guanylate kinase-like domain in the interval 3-181 (GTLYIVSASS…AVSEMSAIFT (179 aa)). 10 to 17 (ASSGTGKS) contacts ATP.

It belongs to the guanylate kinase family.

Its subcellular location is the cytoplasm. It catalyses the reaction GMP + ATP = GDP + ADP. In terms of biological role, essential for recycling GMP and indirectly, cGMP. The polypeptide is Guanylate kinase (Xylella fastidiosa (strain Temecula1 / ATCC 700964)).